The chain runs to 144 residues: Putative low molecular weight protein-tyrosine-phosphatase (144 aa).

Cys-9 functions as the Nucleophile in the catalytic mechanism. Arg-15 is an active-site residue. The active-site Proton donor is the Asp-115.

Belongs to the low molecular weight phosphotyrosine protein phosphatase family.

The enzyme catalyses O-phospho-L-tyrosyl-[protein] + H2O = L-tyrosyl-[protein] + phosphate. The sequence is that of Putative low molecular weight protein-tyrosine-phosphatase from Klebsiella pneumoniae.